A 345-amino-acid polypeptide reads, in one-letter code: Probable translocation protein y4yO (345 aa).

The segment covering methionine 1–lysine 22 has biased composition (basic and acidic residues). A disordered region spans residues methionine 1–glutamine 25. 3 consecutive transmembrane segments (helical) span residues leucine 87 to leucine 107, valine 151 to tyrosine 171, and glutamine 189 to glutamine 209.

Belongs to the type III secretion exporter family.

It is found in the cell membrane. In terms of biological role, could be involved in the secretion of an unknown factor. The protein is Probable translocation protein y4yO of Sinorhizobium fredii (strain NBRC 101917 / NGR234).